The following is a 372-amino-acid chain: sn-glycerol-3-phosphate import ATP-binding protein UgpC (372 aa).

Positions 2–233 (LDIQQLVKTY…PASTFVASFI (232 aa)) constitute an ABC transporter domain. Residue 35-42 (GPSGCGKS) coordinates ATP.

It belongs to the ABC transporter superfamily. sn-glycerol-3-phosphate importer (TC 3.A.1.1.3) family. The complex is composed of two ATP-binding proteins (UgpC), two transmembrane proteins (UgpA and UgpE) and a solute-binding protein (UgpB).

It localises to the cell inner membrane. It carries out the reaction sn-glycerol 3-phosphate(out) + ATP + H2O = sn-glycerol 3-phosphate(in) + ADP + phosphate + H(+). Part of the ABC transporter complex UgpBAEC involved in sn-glycerol-3-phosphate (G3P) import. Responsible for energy coupling to the transport system. The protein is sn-glycerol-3-phosphate import ATP-binding protein UgpC of Vibrio vulnificus (strain YJ016).